Here is a 229-residue protein sequence, read N- to C-terminus: Large ribosomal subunit protein uL1 (229 aa).

Belongs to the universal ribosomal protein uL1 family. As to quaternary structure, part of the 50S ribosomal subunit.

In terms of biological role, binds directly to 23S rRNA. The L1 stalk is quite mobile in the ribosome, and is involved in E site tRNA release. Functionally, protein L1 is also a translational repressor protein, it controls the translation of the L11 operon by binding to its mRNA. The sequence is that of Large ribosomal subunit protein uL1 from Streptococcus gordonii (strain Challis / ATCC 35105 / BCRC 15272 / CH1 / DL1 / V288).